The sequence spans 1179 residues: ATP-dependent helicase/deoxyribonuclease subunit B (1179 aa).

It belongs to the helicase family. AddB/RexB type 2 subfamily. In terms of assembly, heterodimer of AddA and RexB. Requires Mg(2+) as cofactor.

Functionally, the heterodimer acts as both an ATP-dependent DNA helicase and an ATP-dependent, dual-direction single-stranded exonuclease. Recognizes the chi site generating a DNA molecule suitable for the initiation of homologous recombination. This subunit has 5' -&gt; 3' nuclease activity but not helicase activity. This chain is ATP-dependent helicase/deoxyribonuclease subunit B, found in Lactobacillus delbrueckii subsp. bulgaricus (strain ATCC BAA-365 / Lb-18).